Here is a 321-residue protein sequence, read N- to C-terminus: Basic peroxidase (321 aa).

The first 30 residues, 1-30 (MSYHKSSGTILMVPLFMLLISVNYFMSCNA), serve as a signal peptide directing secretion. At Q31 the chain carries Pyrrolidone carboxylic acid. 4 cysteine pairs are disulfide-bonded: C41–C117, C74–C79, C123–C317, and C202–C228. Catalysis depends on H72, which acts as the Proton acceptor. The Ca(2+) site is built by D73, V76, G78, D80, and S82. P165 contributes to the substrate binding site. H195 is a heme b binding site. T196 serves as a coordination point for Ca(2+). N-linked (GlcNAc...) asparagine glycans are attached at residues N211 and N221. Ca(2+) is bound by residues D241, T244, and D249.

Belongs to the peroxidase family. Classical plant (class III) peroxidase subfamily. Heme b serves as cofactor. Requires Ca(2+) as cofactor. In terms of processing, N-glycosylated. Expressed in tracheary elements, roots, young and old hypocotyls, and stems in the partially glycosylated form and in roots and young hypocotyls in the fully glycosylated form. None of the isoforms is significantly expressed in leaves or cotyledons.

It localises to the secreted. It catalyses the reaction 2 a phenolic donor + H2O2 = 2 a phenolic radical donor + 2 H2O. Removal of H(2)O(2), oxidation of toxic reductants, biosynthesis and degradation of lignin, suberization, auxin catabolism, response to environmental stresses such as wounding, pathogen attack and oxidative stress. These functions might be dependent on each isozyme/isoform in each plant tissue. Involved in the synthesis of highly polymerized lignins. The protein is Basic peroxidase (POD1) of Zinnia elegans (Garden zinnia).